Here is a 540-residue protein sequence, read N- to C-terminus: Pentatricopeptide repeat-containing protein At1g80880, mitochondrial (540 aa).

The N-terminal 87 residues, Met-1–Leu-87, are a transit peptide targeting the mitochondrion. 10 PPR repeats span residues Asp-154–Val-184, Thr-188–Pro-222, Tyr-223–Leu-253, Asp-257–Pro-292, Asn-293–Pro-327, Gly-328–Pro-362, Asp-363–Pro-397, Phe-402–Pro-428, Thr-429–Ala-463, and Asn-464–Gly-498. Residues Val-514–Lys-540 are disordered.

This sequence belongs to the PPR family. P subfamily.

Its subcellular location is the mitochondrion. The sequence is that of Pentatricopeptide repeat-containing protein At1g80880, mitochondrial from Arabidopsis thaliana (Mouse-ear cress).